We begin with the raw amino-acid sequence, 358 residues long: Alanine racemase (358 aa).

Lys35 functions as the Proton acceptor; specific for D-alanine in the catalytic mechanism. Lys35 carries the N6-(pyridoxal phosphate)lysine modification. Arg130 contributes to the substrate binding site. The active-site Proton acceptor; specific for L-alanine is the Tyr255. Substrate is bound at residue Met303.

This sequence belongs to the alanine racemase family. The cofactor is pyridoxal 5'-phosphate.

The catalysed reaction is L-alanine = D-alanine. Its pathway is amino-acid biosynthesis; D-alanine biosynthesis; D-alanine from L-alanine: step 1/1. Its function is as follows. Catalyzes the interconversion of L-alanine and D-alanine. May also act on other amino acids. In Shewanella loihica (strain ATCC BAA-1088 / PV-4), this protein is Alanine racemase (alr).